We begin with the raw amino-acid sequence, 570 residues long: Dihydroxy-acid dehydratase (570 aa).

The tract at residues 1–25 is disordered; the sequence is MSQQDSPANADHRRRHSSIVVDGPG. Cys-60 contacts [2Fe-2S] cluster. Mg(2+) is bound at residue Asp-92. Cys-133 serves as a coordination point for [2Fe-2S] cluster. 2 residues coordinate Mg(2+): Asp-134 and Lys-135. An N6-carboxylysine modification is found at Lys-135. Residue Cys-202 participates in [2Fe-2S] cluster binding. A Mg(2+)-binding site is contributed by Glu-453. Residue Ser-479 is the Proton acceptor of the active site.

The protein belongs to the IlvD/Edd family. As to quaternary structure, homodimer. [2Fe-2S] cluster serves as cofactor. It depends on Mg(2+) as a cofactor.

It catalyses the reaction (2R)-2,3-dihydroxy-3-methylbutanoate = 3-methyl-2-oxobutanoate + H2O. The catalysed reaction is (2R,3R)-2,3-dihydroxy-3-methylpentanoate = (S)-3-methyl-2-oxopentanoate + H2O. Its pathway is amino-acid biosynthesis; L-isoleucine biosynthesis; L-isoleucine from 2-oxobutanoate: step 3/4. The protein operates within amino-acid biosynthesis; L-valine biosynthesis; L-valine from pyruvate: step 3/4. Functions in the biosynthesis of branched-chain amino acids. Catalyzes the dehydration of (2R,3R)-2,3-dihydroxy-3-methylpentanoate (2,3-dihydroxy-3-methylvalerate) into 2-oxo-3-methylpentanoate (2-oxo-3-methylvalerate) and of (2R)-2,3-dihydroxy-3-methylbutanoate (2,3-dihydroxyisovalerate) into 2-oxo-3-methylbutanoate (2-oxoisovalerate), the penultimate precursor to L-isoleucine and L-valine, respectively. The chain is Dihydroxy-acid dehydratase from Chromohalobacter salexigens (strain ATCC BAA-138 / DSM 3043 / CIP 106854 / NCIMB 13768 / 1H11).